The primary structure comprises 404 residues: ATP phosphoribosyltransferase regulatory subunit (404 aa).

Belongs to the class-II aminoacyl-tRNA synthetase family. HisZ subfamily. In terms of assembly, heteromultimer composed of HisG and HisZ subunits.

The protein localises to the cytoplasm. The protein operates within amino-acid biosynthesis; L-histidine biosynthesis; L-histidine from 5-phospho-alpha-D-ribose 1-diphosphate: step 1/9. Required for the first step of histidine biosynthesis. May allow the feedback regulation of ATP phosphoribosyltransferase activity by histidine. The chain is ATP phosphoribosyltransferase regulatory subunit from Picosynechococcus sp. (strain ATCC 27264 / PCC 7002 / PR-6) (Agmenellum quadruplicatum).